The sequence spans 915 residues: Clathrin coat assembly protein AP180 (915 aa).

The region spanning 14–145 is the ENTH domain; that stretch reads QYSVTGSAVA…FSYRQMAFDF (132 aa). Disordered stretches follow at residues 285–326, 391–425, and 497–522; these read LEGK…DTSP, SVPS…ATTA, and PETS…PSPA. Phosphoserine is present on residues S296, S300, and S306. The span at 302–324 shows a compositional bias: polar residues; the sequence is LSKSSPATTVTSPNSTPAKTIDT. A glycan (O-linked (GlcNAc) threonine) is linked at T310. Phosphoserine is present on S313. Phosphothreonine is present on T317. Low complexity-rich tracts occupy residues 410–425 and 500–511; these read TTTT…ATTA and SAPVVTPTASTA. A compositionally biased stretch (pro residues) spans 512–522; the sequence is PPVPATAPSPA. Phosphoserine occurs at positions 594, 600, 627, 640, and 646. Over residues 720 to 735 the composition is skewed to low complexity; the sequence is TTPSTSSSSSFDPSGD. The disordered stretch occupies residues 720 to 765; sequence TTPSTSSSSSFDPSGDLLMPTMAPSGQPAPVSMVPPSPAMSASKGL. S775 carries the phosphoserine modification. The tract at residues 817 to 855 is disordered; sequence SAGVPPQGTVPPTSSVPPGAGAPSVGQPGAGYGMPPAGT. The residue at position 873 (R873) is an Asymmetric dimethylarginine; alternate. Residue R873 is modified to Omega-N-methylarginine; alternate. Residues 875-915 are disordered; it reads PFGAAAVPGTQLSPSPTPATQSPKKPPAKDPLADLNIKDFL. Residues 884–896 show a composition bias toward polar residues; the sequence is TQLSPSPTPATQS. Over residues 901 to 915 the composition is skewed to basic and acidic residues; the sequence is PAKDPLADLNIKDFL.

Belongs to the PICALM/SNAP91 family. In terms of assembly, binds AP2A2. Interacts with AP2B1; clathrin competes with SNAP91. Thr-310 can be modified by the addition of N-acetylglucosamine which can be further phosphorylated. The form with phosphorylated O-linked N-acetylglucosamine is predominant in brain synaptosomes. There is no evidence for direct Thr-310 phosphorylation.

The protein resides in the cell membrane. Its subcellular location is the membrane. It localises to the coated pit. Functionally, adaptins are components of the adapter complexes which link clathrin to receptors in coated vesicles. Clathrin-associated protein complexes are believed to interact with the cytoplasmic tails of membrane proteins, leading to their selection and concentration. Binding of AP180 to clathrin triskelia induces their assembly into 60-70 nm coats. This is Clathrin coat assembly protein AP180 (Snap91) from Rattus norvegicus (Rat).